The primary structure comprises 33 residues: Pardaxin P-4 (33 aa).

This sequence belongs to the pardaxin family. In terms of assembly, monomer. In aqueous solution exists as a tetramer.

Its subcellular location is the secreted. The protein localises to the target cell membrane. Its function is as follows. Exhibits unusual shark repellent and surfactant properties. Forms voltage-dependent, ion-permeable channels in membranes. At high concentration causes cell membrane lysis. The sequence is that of Pardaxin P-4 from Pardachirus marmoratus (Finless sole).